Consider the following 430-residue polypeptide: 3-phosphoshikimate 1-carboxyvinyltransferase (430 aa).

3-phosphoshikimate-binding residues include Lys23, Ser24, and Arg28. Residue Lys23 participates in phosphoenolpyruvate binding. 2 residues coordinate phosphoenolpyruvate: Gly95 and Arg123. Residues Ser169, Gln171, Asp315, and Lys342 each contribute to the 3-phosphoshikimate site. Position 171 (Gln171) interacts with phosphoenolpyruvate. Asp315 acts as the Proton acceptor in catalysis. Positions 346 and 388 each coordinate phosphoenolpyruvate.

It belongs to the EPSP synthase family. Monomer.

The protein resides in the cytoplasm. The enzyme catalyses 3-phosphoshikimate + phosphoenolpyruvate = 5-O-(1-carboxyvinyl)-3-phosphoshikimate + phosphate. It functions in the pathway metabolic intermediate biosynthesis; chorismate biosynthesis; chorismate from D-erythrose 4-phosphate and phosphoenolpyruvate: step 6/7. Its function is as follows. Catalyzes the transfer of the enolpyruvyl moiety of phosphoenolpyruvate (PEP) to the 5-hydroxyl of shikimate-3-phosphate (S3P) to produce enolpyruvyl shikimate-3-phosphate and inorganic phosphate. In Streptococcus pyogenes serotype M3 (strain ATCC BAA-595 / MGAS315), this protein is 3-phosphoshikimate 1-carboxyvinyltransferase.